We begin with the raw amino-acid sequence, 65 residues long: Large ribosomal subunit protein bL35 (65 aa).

Positions 1-29 (MPKMKTHSGAKKRFKLTGSGKVKRQQANR) are disordered.

The protein belongs to the bacterial ribosomal protein bL35 family.

This is Large ribosomal subunit protein bL35 from Kocuria rhizophila (strain ATCC 9341 / DSM 348 / NBRC 103217 / DC2201).